A 164-amino-acid polypeptide reads, in one-letter code: Protein-export protein SecB (164 aa).

Residues 1–12 (MPDKDEITHDAQ) show a composition bias toward basic and acidic residues. Residues 1 to 22 (MPDKDEITHDAQSENEESLPLA) form a disordered region.

It belongs to the SecB family. In terms of assembly, homotetramer, a dimer of dimers. One homotetramer interacts with 1 SecA dimer.

Its subcellular location is the cytoplasm. One of the proteins required for the normal export of preproteins out of the cell cytoplasm. It is a molecular chaperone that binds to a subset of precursor proteins, maintaining them in a translocation-competent state. It also specifically binds to its receptor SecA. This is Protein-export protein SecB from Neorickettsia sennetsu (strain ATCC VR-367 / Miyayama) (Ehrlichia sennetsu).